Reading from the N-terminus, the 134-residue chain is MERKMLKSKIHRATVTGADLHYEGSITIDLDLMEASDIIPYEAVCIWDVTNGSRFETYAIEGERGSGVICINGAAARLVAPQDLVIIASFVNMENAEAIAHEPKLVFVDDKNRMLESRKEVAGQATLKSVHWKN.

Catalysis depends on S25, which acts as the Schiff-base intermediate with substrate; via pyruvic acid. S25 is modified (pyruvic acid (Ser)). T57 provides a ligand contact to substrate. Y58 serves as the catalytic Proton donor. Position 73–75 (73–75 (GAA)) interacts with substrate.

The protein belongs to the PanD family. In terms of assembly, heterooctamer of four alpha and four beta subunits. Pyruvate serves as cofactor. Post-translationally, is synthesized initially as an inactive proenzyme, which is activated by self-cleavage at a specific serine bond to produce a beta-subunit with a hydroxyl group at its C-terminus and an alpha-subunit with a pyruvoyl group at its N-terminus.

The protein localises to the cytoplasm. It carries out the reaction L-aspartate + H(+) = beta-alanine + CO2. It functions in the pathway cofactor biosynthesis; (R)-pantothenate biosynthesis; beta-alanine from L-aspartate: step 1/1. Its function is as follows. Catalyzes the pyruvoyl-dependent decarboxylation of aspartate to produce beta-alanine. In Geobacter sp. (strain M21), this protein is Aspartate 1-decarboxylase.